The chain runs to 865 residues: Alanine--tRNA ligase (865 aa).

Histidine 552, histidine 556, cysteine 654, and histidine 658 together coordinate Zn(2+).

Belongs to the class-II aminoacyl-tRNA synthetase family. The cofactor is Zn(2+).

It localises to the cytoplasm. The enzyme catalyses tRNA(Ala) + L-alanine + ATP = L-alanyl-tRNA(Ala) + AMP + diphosphate. Catalyzes the attachment of alanine to tRNA(Ala) in a two-step reaction: alanine is first activated by ATP to form Ala-AMP and then transferred to the acceptor end of tRNA(Ala). Also edits incorrectly charged Ser-tRNA(Ala) and Gly-tRNA(Ala) via its editing domain. This chain is Alanine--tRNA ligase, found in Coxiella burnetii (strain Dugway 5J108-111).